The following is a 397-amino-acid chain: DNA-binding protein (397 aa).

The Zn(2+) site is built by Cys116 and His118. Positions 129–161 (IEMAATSESGVAALKEGRGAVEINRWGRQVVKI) are flexible loop. Zn(2+)-binding residues include Cys169, Cys185, Cys225, Cys227, Cys276, and Cys289. A C-terminal arm, DBP binding region spans residues 335–397 (ALLPEGSVNE…IVLESSEEDE (63 aa)). Positions 338 to 397 (PEGSVNEDENPFGLDNSEDEEEVVPPSPPSPARKRTRTTVAEVHHKKKKKIVLESSEEDE) are disordered. Residues 342–360 (VNEDENPFGLDNSEDEEEV) show a composition bias toward acidic residues.

This sequence belongs to the adenoviridae E2A DNA-binding protein family. As to quaternary structure, homomultimerizes on viral ssDNA bound to pTP. Forms a initiation complex with viral polymerase, pTP and hosts NFIA and POU2F1/OCT1. Interacts with host SRCAP.

It localises to the host nucleus. Functionally, plays a role in the elongation phase of viral strand displacement replication by unwinding the template in an ATP-independent fashion, employing its capacity to form multimers. Also enhances the rate of initiation. Released from template upon second strand synthesis. Assembles in complex with viral pTP, viral pol, host NFIA and host POU2F1/OCT1 on viral origin of replication. Covers the whole ssDNA genome during synthesis. The complementary strand synthesis induces its relese from DNA template. May inhibit cellular transcription mediated by the interaction between host SRCAP and CBP. In Snake adenovirus serotype 1 (SnAdV-1), this protein is DNA-binding protein.